The chain runs to 142 residues: ATP synthase epsilon chain (142 aa).

It belongs to the ATPase epsilon chain family. In terms of assembly, F-type ATPases have 2 components, CF(1) - the catalytic core - and CF(0) - the membrane proton channel. CF(1) has five subunits: alpha(3), beta(3), gamma(1), delta(1), epsilon(1). CF(0) has three main subunits: a, b and c.

Its subcellular location is the cell inner membrane. In terms of biological role, produces ATP from ADP in the presence of a proton gradient across the membrane. This Mannheimia succiniciproducens (strain KCTC 0769BP / MBEL55E) protein is ATP synthase epsilon chain.